A 508-amino-acid polypeptide reads, in one-letter code: MLO-like protein 3 (508 aa).

Over 1–21 (MTDKEESNHSSEVGAVRSLQE) the chain is Extracellular. Residues 22–42 (TPTWALATVCFFFIAVSICLE) form a helical membrane-spanning segment. Topologically, residues 43–68 (RLINLLSTRLKKNRKTSLLEAVEKLK) are cytoplasmic. Residues 69-89 (SVLMVLGFMSLMLNVTEGEVS) traverse the membrane as a helical segment. At 90–153 (KICIPIKYAN…SEEGLTQLSY (64 aa)) the chain is on the extracellular side. Residues 154 to 174 (FFFVLACMHILCNLAILLLGM) traverse the membrane as a helical segment. The Cytoplasmic portion of the chain corresponds to 175–275 (AKMRKWNSWE…IQRSLHEDFK (101 aa)). A helical transmembrane segment spans residues 276-296 (TVVGISPLMWLTVVIFMLLDV). Topologically, residues 297-304 (SGWRVYFY) are extracellular. A helical transmembrane segment spans residues 305-325 (MSFVPLIIVLVIGTKLEMIVA). At 326–357 (KMAVTIKENNSVIRGTPLVESNDTHFWFSNPR) the chain is on the cytoplasmic side. The chain crosses the membrane as a helical span at residues 358–378 (FLLSILHYTLFLNTFEMAFIV). At 379–401 (WITWQFGINSCYHDNQGIIITRL) the chain is on the extracellular side. The helical transmembrane segment at 402-422 (VLAVTVQFLSSYITLPLYAIV) threads the bilayer. At 423–508 (TQMGSSYKRA…EIQIQEKTER (86 aa)) the chain is on the cytoplasmic side. The segment at 436 to 457 (EQLANVLRHWQGMVRDKKKTIQ) is calmodulin-binding. The interval 453-492 (KKTIQTPDTDNNSNNNNGDIDSGESPVQTEVASEFRFSGR) is disordered. Ser494 carries the post-translational modification Phosphoserine.

This sequence belongs to the MLO family.

The protein resides in the membrane. May be involved in modulation of pathogen defense and leaf cell death. Activity seems to be regulated by Ca(2+)-dependent calmodulin binding and seems not to require heterotrimeric G proteins. This chain is MLO-like protein 3 (MLO3), found in Arabidopsis thaliana (Mouse-ear cress).